The following is a 78-amino-acid chain: Small ribosomal subunit protein bS16c (78 aa).

The protein belongs to the bacterial ribosomal protein bS16 family.

Its subcellular location is the plastid. The protein resides in the chloroplast. The protein is Small ribosomal subunit protein bS16c of Daucus carota (Wild carrot).